The primary structure comprises 187 residues: Bis(5'-nucleosyl)-tetraphosphatase, symmetrical (187 aa).

The region spanning 18-132 (RYQHTIGVME…IFLADYIEPN (115 aa)) is the HD domain. Residue histidine 21 coordinates ADP. Positions 21, 50, and 51 each coordinate Fe cation. Residues 51–54 (DYAK), histidine 83, 109–110 (HT), aspartate 127, arginine 133, and 170–175 (PIYPDT) each bind ADP. Aspartate 127 contributes to the Fe cation binding site.

The protein belongs to the Ap4A hydrolase YqeK family. As to quaternary structure, homodimer.

It catalyses the reaction P(1),P(4)-bis(5'-adenosyl) tetraphosphate + H2O = 2 ADP + 2 H(+). Its function is as follows. Hydrolyzes diadenosine 5',5'''-P1,P4-tetraphosphate (Ap4A) to yield ADP. The protein is Bis(5'-nucleosyl)-tetraphosphatase, symmetrical of Halalkalibacterium halodurans (strain ATCC BAA-125 / DSM 18197 / FERM 7344 / JCM 9153 / C-125) (Bacillus halodurans).